A 479-amino-acid polypeptide reads, in one-letter code: MKKVIVIGVNHAGTSFIRTLLSKSKDFQVNAYDRNTNISFLGCGIALAVSGVVKNTEDLFYSTPEELKAMGANVFMAHDVVGLDLDKKQVIVKDLATGKETVDHYDQLVVASGAWPICMNVENEVTHTQLQFNHTDKYCGNIKNLISCKLYQHALTLIDSFRHDKSIKSVAIVGSGYIGLELAEAAWQCGKQVTVIDMLDKPAGNNFDEEFTNELEKAMKKAGINLMMGSAVKGFIVDADKNVVKGVETDKGRVDADLVIQSIGFRPNTQFVPKDRQFEFNRNGSIKVNEYLQALNHENVYVIGGAAAIYDAASEQYENIDLATNAVKSGLVAAMHMIGSKAVKLESIVGTNALHVFGLNLAATGLTEKRAKMNGFDVGVSIVDDNDRPEFMGTFDKVRFKLIYDKKTLRLLGAQLLSWNTNHSEIIFYIALAVQKKMLISELGLVDVYFLPHYNKPFNFVLAAVLQALGFSYYTPKNK.

Residues 8–12, D33, C43, V80, 111–114, K149, and Y177 each bind FAD; these read GVNHA and ASGA. H11 acts as the Proton acceptor in catalysis. Catalysis depends on C43, which acts as the Redox-active. The residue at position 43 (C43) is a Cysteine sulfinic acid (-SO2H). NAD(+) contacts are provided by residues 170 to 185, D197, and G264; that span reads VAIV…LAEA. FAD-binding positions include 295–305, L322, A323, and T324; that span reads LNHENVYVIGG. A353 serves as a coordination point for NAD(+). Residue F450 participates in FAD binding.

This sequence belongs to the class-III pyridine nucleotide-disulfide oxidoreductase family. The cofactor is FAD.

The enzyme catalyses 2 NADH + O2 + 2 H(+) = 2 NAD(+) + 2 H2O. Catalyzes the four-electron reduction of molecular oxygen to water. This Mycoplasma pneumoniae (strain ATCC 29342 / M129 / Subtype 1) (Mycoplasmoides pneumoniae) protein is NADH oxidase (nox).